A 156-amino-acid polypeptide reads, in one-letter code: Probable cyclic pyranopterin monophosphate synthase (156 aa).

Substrate-binding positions include 74 to 76 and 110 to 111; these read MCH and ME. Aspartate 125 is an active-site residue.

The protein belongs to the MoaC family. Homohexamer; trimer of dimers.

The enzyme catalyses (8S)-3',8-cyclo-7,8-dihydroguanosine 5'-triphosphate = cyclic pyranopterin phosphate + diphosphate. It participates in cofactor biosynthesis; molybdopterin biosynthesis. In terms of biological role, catalyzes the conversion of (8S)-3',8-cyclo-7,8-dihydroguanosine 5'-triphosphate to cyclic pyranopterin monophosphate (cPMP). This is Probable cyclic pyranopterin monophosphate synthase from Methanospirillum hungatei JF-1 (strain ATCC 27890 / DSM 864 / NBRC 100397 / JF-1).